The chain runs to 405 residues: Octaketide synthase 3 (405 aa).

Positions 1–10 (MGSIAESSPL) are enriched in polar residues. Residues 1 to 22 (MGSIAESSPLMSRENVEGIRKA) form a disordered region. C176 is a catalytic residue. CoA contacts are provided by residues S283 and 320-323 (GGRA).

Belongs to the thiolase-like superfamily. Chalcone/stilbene synthases family. As to quaternary structure, homodimer.

It participates in secondary metabolite biosynthesis; flavonoid biosynthesis. Catalyzes the iterative condensations of 8 molecules of malonyl-CoA to produce aromatic octaketides, SEK4 and SEK4b, the products of the minimal polyketide synthase for the benzoisochromanequinone actinorhodin. May be involved in the biosynthesis of the octaketide barbaloin. The sequence is that of Octaketide synthase 3 (PKS5) from Aloe arborescens (Kidachi aloe).